The chain runs to 194 residues: Molybdenum cofactor guanylyltransferase (194 aa).

GTP-binding positions include 12-14 (LAG), Lys-25, Asn-53, Asp-71, and Asp-101. Residue Asp-101 coordinates Mg(2+).

It belongs to the MobA family. Monomer. The cofactor is Mg(2+).

Its subcellular location is the cytoplasm. It carries out the reaction Mo-molybdopterin + GTP + H(+) = Mo-molybdopterin guanine dinucleotide + diphosphate. Functionally, transfers a GMP moiety from GTP to Mo-molybdopterin (Mo-MPT) cofactor (Moco or molybdenum cofactor) to form Mo-molybdopterin guanine dinucleotide (Mo-MGD) cofactor. The sequence is that of Molybdenum cofactor guanylyltransferase from Escherichia coli O6:H1 (strain CFT073 / ATCC 700928 / UPEC).